The chain runs to 248 residues: Probable transcriptional regulatory protein Atu3727 (248 aa).

Positions 1-21 are disordered; sequence MAGHSQFKNIMHRKGKQDSVR.

This sequence belongs to the TACO1 family.

It is found in the cytoplasm. The polypeptide is Probable transcriptional regulatory protein Atu3727 (Agrobacterium fabrum (strain C58 / ATCC 33970) (Agrobacterium tumefaciens (strain C58))).